The following is a 1534-amino-acid chain: MAERANLVFHNKEIDGTAIKRLISRLIDHFGMGYTSHILDQIKTLGFHQATTTSISLGIEDLLTIPSKGWLVQDAEQQSFLLEKHYYYGAVHAVEKLRQSVEIWYATSEYLKQEMNSNFRITDPSNPVYLMSFSGARGNASQVHQLVGMRGLMADPQGQMIDLPIQSNLREGLSLTEYIISCYGARKGVVDTAVRTADAGYLTRRLVEVVQHIIVRRRDCGTIQGISVSPQNGMTEKLFVQTLIGRVLADDIYIGSRCIASRNQDIGIGLVNRFITAFRAQPFRAQPIYIRTPFTCRSTSWICQLCYGRSPTHGDLVELGEAVGIIAGQSIGEPGTQLTLRTFHTGGVFTGGTADLIRSPSNGKIQFNEDLVHPTRTRHGQPAFLCYIDLHVTIQSQDILHSVNIPLKSLILVQNDQYVESEQVIAEIRAGMSTLHFKEKVQKHIYSESDGEMHWSTDVYHAPEYQYGNLRRLPKTSHLWILSVSMCRSSIASFSLHKDQDQMNTYSFSVDGRYIFDFSMANDQVSHRLLDTFGKKDREILDYLTPDRIVSNGHWNCFYPSILQDNSDLLAKKRRNRFVVPLQYHQEQEKERISCLGISMEIPFMGVLRRNTIFAYFDDPRYRKDKRGSGIVKFRYRTLEEEYRTQEEEYRTREEEYRTREEEYRTREEDSEDEYESPENKYRTREGEGEYEILEDEYRTLEDEYETLEDEYGILEDEYRTLEKDSEEEYGSLENKYRTREGEGEYEILEEDSEEEYGSSEDGSEKEYGTLEEDSEEDSEEDSEDEYGSPEENSILKKEGFIEHRGTKEFSLKYQKEVDRFFFILQELHILPRSSSLKVLDNSIIGVDTQLTKNTRSRLGGLVRVKRKKSHTELKIFSGDIHFPEEADKILGGSLIPPEREKKDSKESKKRKNWVYVQRKKILKSKEKYFVSVRPAVAYEMDEGRNLATLFPQDLLQEEDNLQLRLVNFISHENSKLTQRIYHTNSQFVRTCLVVNWEQEEKEGARASLVEVRTNDLIRDFLRIELVKSTISYTRRRYDRTSVGLIPNNRLDRNNTNSFYSKAKIQSLSQHQEVIGTLLNRNKEYPSLMILLASNCSRIGLFKNSKYPNAVKESNPRIPIRDIFGLLGVIVPSISNFSSSYYLLTHNQILLKKYLFLDNLKQTFQVLQGLKYSLIDENKRISNFDSNIMLEPFHLNWHFLHHDSWEETLAIIHLGQFICENLCLFKSHIKKSGQIFIVNMDSFVLRAAKPYLATIGATVHGHYGKILYKGDRLVTFIYEKSRSSDITQGLPKVEQIFEARSIDSLSPNLERRIEDWNERIPRILGVPWGFLIGAELTIAQSRISLVNKIQKVYRSQGVQIHNRHIEIIIRQVTSKVRVSEDGMSNVFLPGELIGLLRAERAGRALDESIYYRAILLGITRASLNTQSFISEASFQETARVLAKAALRGRIDWLKGLKENVVLGGIIPVGTGFQKFVHRSPQDKNLYFEIQKKNLFASEMRDILFLHTELVSSDSDVTNNFYETSETPFTPIYTI.

Zn(2+)-binding residues include Cys220, Cys296, Cys303, and Cys306. 2 stretches are compositionally biased toward basic and acidic residues: residues 644–668 (RTQE…RTRE) and 678–688 (PENKYRTREGE). 2 disordered regions span residues 644-698 (RTQE…EDEY) and 719-800 (YRTL…KKEG). Composition is skewed to acidic residues over residues 744 to 762 (GEYE…SSED) and 770 to 789 (TLEE…EYGS).

Belongs to the RNA polymerase beta' chain family. RpoC2 subfamily. In plastids the minimal PEP RNA polymerase catalytic core is composed of four subunits: alpha, beta, beta', and beta''. When a (nuclear-encoded) sigma factor is associated with the core the holoenzyme is formed, which can initiate transcription. Zn(2+) is required as a cofactor.

The protein localises to the plastid. Its subcellular location is the chloroplast. The catalysed reaction is RNA(n) + a ribonucleoside 5'-triphosphate = RNA(n+1) + diphosphate. Its function is as follows. DNA-dependent RNA polymerase catalyzes the transcription of DNA into RNA using the four ribonucleoside triphosphates as substrates. This Saccharum officinarum (Sugarcane) protein is DNA-directed RNA polymerase subunit beta''.